The sequence spans 690 residues: Subtilisin-like protease 1 (690 aa).

The signal sequence occupies residues 1–25 (MMLNKKVVALCTLTLHLFCIFLCLG). Positions 26 to 219 (KEVRSEENGK…IESDKLVSAD (194 aa)) are cleaved as a propeptide — inhibition peptide. The segment at 99–131 (EKNKNDNHNNNNNNNNISSSSSSSSNTFGEEKE) is disordered. Residues 106–124 (HNNNNNNNNISSSSSSSSN) show a composition bias toward low complexity. N114 carries an N-linked (GlcNAc...) asparagine glycan. Residues N147, T150, and P152 each contribute to the Ca(2+) site. Residue N173 is glycosylated (N-linked (GlcNAc...) asparagine). G207 is a binding site for Ca(2+). N-linked (GlcNAc...) asparagine glycosylation occurs at N263. 2 disordered regions span residues 266-286 (HAAT…DTFS) and 305-334 (NNNN…RPGK). Residues 305-330 (NNNNYYYSHSSNGHNSSSRNSSSSRS) are compositionally biased toward low complexity. N319 and N324 each carry an N-linked (GlcNAc...) asparagine glycan. Ca(2+) is bound at residue E340. The region spanning 345 to 663 (QWGLDLSRLD…AGYADINKAV (319 aa)) is the Peptidase S8 domain. 2 disulfides stabilise this stretch: C371-C481 and C460-C477. The active-site Charge relay system is D374. Positions 383, 394, 398, 401, 402, 403, 404, 406, 408, 410, and 411 each coordinate Ca(2+). A glycan (N-linked (GlcNAc...) asparagine) is linked at N419. The active-site Charge relay system is H430. The Ca(2+) site is built by I441, N444, I446, and V448. 3 N-linked (GlcNAc...) asparagine glycosylation sites follow: N490, N503, and N522. A disulfide bridge connects residues C523 and C536. Residue N605 is glycosylated (N-linked (GlcNAc...) asparagine). Catalysis depends on S608, which acts as the Charge relay system. A glycan (N-linked (GlcNAc...) asparagine) is linked at N677.

The protein belongs to the peptidase S8 family. In terms of assembly, heterodimer between p54 form and prodomain p31; the interaction inhibits p54 catalytic activity. Heterodimer p31-p54 is monomeric at basic pH and dimeric at acidic pH; dimerization is driven by the N-terminal prodomain (p31). Ca(2+) is required as a cofactor. Post-translationally, the prodomain (p31) is cleaved, probably by autocatalysis, during the transport to or in the Golgi apparatus, and remains non-covalently associated with the p54 form as an inhibitor. p54 is further cleaved into the p47 form. This cleavage is likely occurring in the exoneme prior to egress and is mediated by PMX/plasmepsin X. The p54-to-p47 conversion can be also autocatalytic. Heterodimer p31-p54 is activated by cleavage of prodomain (p31) by the aspartic protease PMX; cleavage by PMX abolishes inhibitory capacity of p31. Primary autocatalytic processing of SUB1 is essential for parasite growth; the p54-to-p47 conversion is dispensable for SUB1 functions in the parasites. In terms of processing, the disulfide bond between Cys-523 and Cys-536 acts as a redox-sensitive disulfide switch. The oxidized form is required for catalytic activity. The relevance of N-glycosylation is not clear. In an insect expression system, SUB1 glycosylation appears to affect its processing into the active mature form suggesting that SUB1 may not be N-glycosylated in parasites.

Its subcellular location is the secreted. The protein resides in the parasitophorous vacuole lumen. It carries out the reaction Hydrolysis of proteins with broad specificity for peptide bonds, and a preference for a large uncharged residue in P1. Hydrolyzes peptide amides.. Its activity is regulated as follows. p54 and probably p47 forms are inhibited by the non-covalent interaction with the cleaved propeptide. Inhibited by subtilisin propeptide-like protein SUB1-ProM. Inhibited by 3,4-dichloroisocoumarin (DCI) and 4-(hydroxymercuri)benzoic acid (pHMB). Partially inhibited by chymostatin, leupeptin, phenylmethylsulfonyl fluoride (PMSF), and 4-(2-aminoethyl)benzenesulfonyl fluoride. In terms of biological role, serine protease which plays an essential role in merozoite invasion of and egress from host erythrocytes by processing and activating various merozoite surface and parasitophorous vacuole proteins. Mediates the proteolytic maturation of serine proteases SERA4, SERA5 and SERA6 just prior to merozoite egress. Prior to merozoite egress, cleaves merozoite surface proteins MSP1, MSP6 and MSP7, which form the MSP1/6/7 complex, and thereby may prime the parasite cell surface for invasion of fresh erythrocytes. Prior to merozoite egress, cleaves MSRP2 converting it to MSRP2 p25 form, and RAP1 converting it to RAP1 p67 form. The polypeptide is Subtilisin-like protease 1 (Plasmodium falciparum).